The primary structure comprises 272 residues: uncharacterized protein (272 aa).

Residues 12–34, 39–40, 77–78, and asparagine 104 each bind NAD(+); these read FITGAARGLGRAHAVRLAADGAN, DI, and DV. Serine 153 serves as a coordination point for substrate. Tyrosine 170 functions as the Proton acceptor in the catalytic mechanism. Residues lysine 174 and 203–205 each bind NAD(+); that span reads VDT.

The protein belongs to the short-chain dehydrogenases/reductases (SDR) family.

This is an uncharacterized protein from Mycobacterium tuberculosis (strain CDC 1551 / Oshkosh).